Consider the following 201-residue polypeptide: Probable nicotinate-nucleotide adenylyltransferase (201 aa).

Belongs to the NadD family.

The catalysed reaction is nicotinate beta-D-ribonucleotide + ATP + H(+) = deamido-NAD(+) + diphosphate. It functions in the pathway cofactor biosynthesis; NAD(+) biosynthesis; deamido-NAD(+) from nicotinate D-ribonucleotide: step 1/1. Catalyzes the reversible adenylation of nicotinate mononucleotide (NaMN) to nicotinic acid adenine dinucleotide (NaAD). This is Probable nicotinate-nucleotide adenylyltransferase from Clostridium botulinum (strain Langeland / NCTC 10281 / Type F).